Here is a 118-residue protein sequence, read N- to C-terminus: Holo-[acyl-carrier-protein] synthase (118 aa).

Residues aspartate 8 and glutamate 58 each contribute to the Mg(2+) site.

The protein belongs to the P-Pant transferase superfamily. AcpS family. The cofactor is Mg(2+).

The protein resides in the cytoplasm. The enzyme catalyses apo-[ACP] + CoA = holo-[ACP] + adenosine 3',5'-bisphosphate + H(+). Transfers the 4'-phosphopantetheine moiety from coenzyme A to a Ser of acyl-carrier-protein. In Lactobacillus helveticus (strain DPC 4571), this protein is Holo-[acyl-carrier-protein] synthase.